Consider the following 520-residue polypeptide: MEELQGYLEKDGSRQQHFLYPLLFQEYIYALAHNHGLNGSIFYEPVEVFGYDNKSSLVLVKRLITRIYQQNFLISLVNDSNQNRFVGYNHNNFFFSHFHSQMISESFAIIVEIPFSLRLVSYFEEKEIPKYHNLRSIHSIFTFLEDKLSHLNYVSDILIPHPIHMEILVQILQCWIQDVPFLHLLRFFLHEYHNLNSLLITQKKSIYVFSKENKRLFRFLYNSYVFEWEFLFVFIRKQSSYLRLTSSGTFLGRTHFYEKIEHLQIKHFVVVCRNYFHRTLWFCKDPFMHYVRYQGKAILASKGTHLLMKKWKYHFFNFWQYYFHVWTQPYRIHINQLSNYSFYFLGYLSSLLLNFSAVRNQMLENSFLIDTITKKFDTXVPVIFLIGSLAKAKFCTVSGHPISEPIWTDLSDSDILDRFGRICRNLSHYHSGSSKKQGLYRIKYILRLSCARTLARKHKSTVRTFLRRLGSGLLEEFFTEEEQVLSLIFPKTTPFILHGSHRERIWYLDIIRINDLVNHS.

This sequence belongs to the intron maturase 2 family. MatK subfamily.

It localises to the plastid. The protein resides in the chloroplast. Usually encoded in the trnK tRNA gene intron. Probably assists in splicing its own and other chloroplast group II introns. This Liriope muscari (Big blue lilyturf) protein is Maturase K.